The sequence spans 260 residues: Neuraminyllactose-binding hemagglutinin (260 aa).

Residues 1–27 form the signal peptide; sequence MRANNHFKDFAWKKCLLGASVVALLVG. Cys28 carries N-palmitoyl cysteine lipidation. Residue Cys28 is the site of S-diacylglycerol cysteine attachment. Positions 134 to 139 are N-acetyl-neuraminyl-alpha(2,3)-lactose binding motif; it reads KRTIQK.

The protein localises to the cell outer membrane. The protein is Neuraminyllactose-binding hemagglutinin (hpaA) of Helicobacter pylori (Campylobacter pylori).